Reading from the N-terminus, the 266-residue chain is 4-hydroxy-tetrahydrodipicolinate reductase (266 aa).

Position 10–15 (10–15 (GPRGRM)) interacts with NAD(+). Lysine 38 provides a ligand contact to NADP(+). NAD(+) is bound by residues 99–101 (GTT) and 125–128 (APNF). Histidine 155 (proton donor/acceptor) is an active-site residue. Histidine 156 serves as a coordination point for (S)-2,3,4,5-tetrahydrodipicolinate. Residue lysine 159 is the Proton donor of the active site. Residue 165 to 166 (GT) coordinates (S)-2,3,4,5-tetrahydrodipicolinate.

Belongs to the DapB family.

It is found in the cytoplasm. It carries out the reaction (S)-2,3,4,5-tetrahydrodipicolinate + NAD(+) + H2O = (2S,4S)-4-hydroxy-2,3,4,5-tetrahydrodipicolinate + NADH + H(+). The catalysed reaction is (S)-2,3,4,5-tetrahydrodipicolinate + NADP(+) + H2O = (2S,4S)-4-hydroxy-2,3,4,5-tetrahydrodipicolinate + NADPH + H(+). The protein operates within amino-acid biosynthesis; L-lysine biosynthesis via DAP pathway; (S)-tetrahydrodipicolinate from L-aspartate: step 4/4. In terms of biological role, catalyzes the conversion of 4-hydroxy-tetrahydrodipicolinate (HTPA) to tetrahydrodipicolinate. The sequence is that of 4-hydroxy-tetrahydrodipicolinate reductase from Bacillus thuringiensis subsp. konkukian (strain 97-27).